We begin with the raw amino-acid sequence, 217 residues long: tRNA (guanine-N(7)-)-methyltransferase (217 aa).

Glu43, Asp68, Asn101, and Asn123 together coordinate S-adenosyl-L-methionine. Lys127 is a binding site for substrate. Residues 129 to 134 (RHNKRR) form an interaction with RNA region. Substrate is bound by residues Asp159 and 196-199 (TEYE).

The protein belongs to the class I-like SAM-binding methyltransferase superfamily. TrmB family.

The catalysed reaction is guanosine(46) in tRNA + S-adenosyl-L-methionine = N(7)-methylguanosine(46) in tRNA + S-adenosyl-L-homocysteine. Its pathway is tRNA modification; N(7)-methylguanine-tRNA biosynthesis. Catalyzes the formation of N(7)-methylguanine at position 46 (m7G46) in tRNA. The chain is tRNA (guanine-N(7)-)-methyltransferase from Clostridium botulinum (strain Langeland / NCTC 10281 / Type F).